The primary structure comprises 819 residues: Transferrin 2 (819 aa).

A signal peptide spans 1 to 21; sequence MASSLVFVALVGALCFTLANA. The Transferrin-like 1 domain occupies 33–373; the sequence is MVWCTKSQAE…QYDQYRSERL (341 aa). Cystine bridges form between C36–C78 and C46–C69. N48 and N66 each carry an N-linked (GlcNAc...) asparagine glycan. Residues D93 and Y121 each contribute to the Fe(3+) site. 3 disulfide bridges follow: C147/C237, C190/C213, and C273/C287. Residues A155 and G156 each coordinate hydrogencarbonate. Residue N187 is glycosylated (N-linked (GlcNAc...) asparagine). Y231 lines the Fe(3+) pocket. The segment at 325-361 is disordered; that stretch reads GTRDDQSRQGGQSFNSRNNINDQNAYGQFDNNDPYRT. Residues 332–361 show a composition bias toward polar residues; sequence RQGGQSFNSRNNINDQNAYGQFDNNDPYRT. A glycan (N-linked (GlcNAc...) asparagine) is linked at N388. One can recognise a Transferrin-like 2 domain in the interval 450–796; it reads MTLCVTSENE…FMRARRITDC (347 aa). Intrachain disulfides connect C453-C490 and C463-C481. 2 residues coordinate Fe(3+): D505 and Y533. 4 disulfides stabilise this stretch: C557–C646, C599–C621, C618–C629, and C687–C701. Residues T559, A565, and G566 each coordinate hydrogencarbonate. N720 is a glycosylation site (N-linked (GlcNAc...) asparagine). C796 is lipidated: GPI-anchor amidated cysteine. Residues 797-819 constitute a propeptide, removed in mature form; that stretch reads YAGASQLALSVGLLLVGSLVAML.

The protein belongs to the transferrin family. Forms a complex composed of septa junction proteins Nrx-IV/Nrx, Tsf2/MTf, Cont and Nrg during late embryogenesis.

The protein localises to the apicolateral cell membrane. It localises to the cell junction. Its subcellular location is the septate junction. Functionally, iron-binding protein and component of septate junctions that form the paracellular permeability barrier in epithelial tissues. In an iron-dependent manner, required for septate junction assembly during epithelial maturation in embryos and mature septa junctions stability. In Drosophila melanogaster (Fruit fly), this protein is Transferrin 2.